Reading from the N-terminus, the 517-residue chain is MAIKSIFIIIIISIITSISELYALDPSFLRLSTSLQRSSFPQDFRFGAASSAYQSEGAANVDGREPSIWDTFTKQYPEKISDGSNGDVADEFYYRFKEDVAHMKEIGLDSFRFSISWSRILPRGTVAGGVNQAGINFYNHLINELISNGIRPLVTLFHWDTPQALEDEYGGFLNPQIVKDFVEYVDICFKEFGDRVKEWITINEPNMFAVLGYNVGNIAPGRCSSYVQNCTVGNSATEPYLVAHYLILSHAATVQLYREKYQSFHGGTIGMTIQTYWMIPKYNTPACREAAKRALDFFFGWFADPITYGDYPKTMRELVGNRLPKFTKKQSKMVRGSFDFFGLNYYTSRYVEDVMFYANTNLSYTTDSRVNQTTEKNGVPVGEPTSADWLFICPEGFQDVLLYIKSKFQNPVILVTENGMPSENDKSLSVNIALNDEAKIKYHQLHLTALLEAVSQGADVRGYYIWSLMDDFEWEFGYKYRYGLVYVDFQDGLKRHLKSSALWYHHFLSNSSSYQMD.

The first 23 residues, M1 to A23, serve as a signal peptide directing secretion. A beta-D-glucoside-binding positions include Q54, H158, and N203 to E204. The active-site Proton donor is E204. A disulfide bridge links C223 with C230. An N-linked (GlcNAc...) asparagine glycan is attached at N229. A beta-D-glucoside is bound at residue Y346. N-linked (GlcNAc...) asparagine glycans are attached at residues N361 and N371. A beta-D-glucoside-binding positions include E417, W466, E473–W474, and Y482. Catalysis depends on E417, which acts as the Nucleophile. Residue N510 is glycosylated (N-linked (GlcNAc...) asparagine).

It belongs to the glycosyl hydrolase 1 family.

It carries out the reaction Hydrolysis of terminal, non-reducing beta-D-glucosyl residues with release of beta-D-glucose.. The sequence is that of Beta-glucosidase 17 from Arabidopsis thaliana (Mouse-ear cress).